The sequence spans 272 residues: Putative phosphatase BU028/BU029 (272 aa).

Asp-8 (nucleophile) is an active-site residue. Asp-8 is a Mg(2+) binding site. Leu-9 contacts phosphate. Residue Asp-10 participates in Mg(2+) binding. Residues 42–43 (SG) and Lys-191 each bind phosphate. Asp-214 contacts Mg(2+). Asn-217 contacts phosphate.

The protein belongs to the HAD-like hydrolase superfamily. Cof family. It depends on Mg(2+) as a cofactor.

This is Putative phosphatase BU028/BU029 from Buchnera aphidicola subsp. Acyrthosiphon pisum (strain APS) (Acyrthosiphon pisum symbiotic bacterium).